We begin with the raw amino-acid sequence, 905 residues long: Transcription termination factor 1 (905 aa).

Basic and acidic residues-rich tracts occupy residues 1–16 (MEGE…PVSD) and 24–33 (IHKERPQKHS). Positions 1-33 (MEGESSRFEIHTPVSDKKKKKCSIHKERPQKHS) are disordered. The segment at 1–223 (MEGESSRFEI…AHKNKSKKKK (223 aa)) is N-terminal region (NRD). Residue Ser65 is modified to Phosphoserine. The tract at residues 151–443 (SHAHKSEALH…KSRPRQKKTQ (293 aa)) is disordered. 2 stretches are compositionally biased toward basic residues: residues 163–174 (VREKKNKKHQRK) and 215–226 (HKNKSKKKKKKS). Ser240 is modified (phosphoserine). Thr248 carries the post-translational modification Phosphothreonine. 3 stretches are compositionally biased toward basic residues: residues 270-283 (THKK…KKKS), 330-339 (NKSKKKKKKS), and 385-401 (TKKK…KRAR). Ser403 carries the phosphoserine modification. Residues 410-419 (PSKNSESTLF) are compositionally biased toward polar residues. Tyr476 bears the Phosphotyrosine mark. Ser478, Ser481, and Ser487 each carry phosphoserine. The interval 498-886 (LQEFIPNIKD…IEKESEGQAP (389 aa)) is may be involved in interaction with ARF. Myb-like domains follow at residues 612–661 (DVNN…SQIS) and 661–745 (SSQR…TEIL). A Glycyl lysine isopeptide (Lys-Gly) (interchain with G-Cter in SUMO2) cross-link involves residue Lys700. Ser872 carries the post-translational modification Phosphoserine.

Oligomer. The oligomeric structure enables to interact simultaneously with two separate DNA fragments. Interacts with BAZ2A/TIP5. Interacts with CAVIN1. Interacts (via the N-terminal region (NRD) and a C-terminal region) with CDKN2A/ARF; the interaction is direct. Interacts (via C-terminal region) with NPM1/B23.

It localises to the nucleus. Its subcellular location is the nucleolus. The protein localises to the nucleoplasm. Multifunctional nucleolar protein that terminates ribosomal gene transcription, mediates replication fork arrest and regulates RNA polymerase I transcription on chromatin. Plays a dual role in rDNA regulation, being involved in both activation and silencing of rDNA transcription. Interaction with BAZ2A/TIP5 recovers DNA-binding activity. The sequence is that of Transcription termination factor 1 (TTF1) from Homo sapiens (Human).